The following is a 384-amino-acid chain: Sialyltransferase-like protein 3 (384 aa).

Residues 1–5 (MKRRH) are Cytoplasmic-facing. A helical; Signal-anchor for type II membrane protein membrane pass occupies residues 6-26 (WSHPSCGLLLLVAVFCLLLVF). At 27–384 (RCSQLRHSGD…FRLPPVSFYR (358 aa)) the chain is on the lumenal side. N241 is a glycosylation site (N-linked (GlcNAc...) asparagine).

Belongs to the glycosyltransferase 29 family.

The protein localises to the golgi apparatus membrane. Functionally, possesses sialyltransferase-like activity in vitro. Transfers sialic acid to the glycoprotein asialofetuin. The transferred sialic acid is linked to galactose of Gal-beta-1,3-GalNAc through alpha-2,6-linkage. In Oryza sativa subsp. indica (Rice), this protein is Sialyltransferase-like protein 3.